The primary structure comprises 180 residues: DNA-directed RNA polymerase subunit Rpo7 (180 aa).

The S1 motif domain occupies Gln-82–Arg-165.

The protein belongs to the eukaryotic RPB7/RPC8 RNA polymerase subunit family. Part of the 13-subunit RNA polymerase complex. Forms a stalk with Rpo4 that extends from the main structure.

The protein localises to the cytoplasm. The enzyme catalyses RNA(n) + a ribonucleoside 5'-triphosphate = RNA(n+1) + diphosphate. Functionally, DNA-dependent RNA polymerase (RNAP) catalyzes the transcription of DNA into RNA using the four ribonucleoside triphosphates as substrates. The highly mobile Rpo4/Rpo7 heterodimer is conditionally required for transcription initiation. In Saccharolobus shibatae (strain ATCC 51178 / DSM 5389 / JCM 8931 / NBRC 15437 / B12) (Sulfolobus shibatae), this protein is DNA-directed RNA polymerase subunit Rpo7.